Here is a 393-residue protein sequence, read N- to C-terminus: MMLNGERIISKPLRWAMVGGGRLSQVGYKHRIGALRDNTAFQLTAGAFDIDAERGKDFGVNLGVDAERCYPNYQTMFAEEAKRQDGIEVVSIATPNGTHYEICKAALEAGVHVICEKPLFFTSAEGQEIKALAEKKGKIVGVTYGFSGNQMLLQMRAMIEQGMIGDIRVVDLQYTHGFCATDEGEKISAAQKWRVDPAIAGPSFVLGDLSTHTYYMSQLIMPKMKIKELLCDRQSFVGSRAPLEDNAHVLMHYENGAVGTMWTSSINAGCMDGHRIRIVGSKASIEWWDSKPNELTYEVQGEPGQTLVRGMPYLDDVCNADERLGALHSEGLSEAWANIYLKFAIAIDAKNREDEEILNNLVYPDIDAGIEGIRWIENCVRSANQGSVWVEFK.

It belongs to the Gfo/Idh/MocA family.

This is an uncharacterized protein from Bacillus subtilis (strain 168).